A 353-amino-acid polypeptide reads, in one-letter code: MKTRFDKAKISGICVSVPEHKICIDDELESVFSNDIKTLKRMKKVIGLNTRYICDENTCVSDLGKHAANTLLQGLNIDKNSLDALIVVTQSPDFFMPSTACYLHQLLNLSSKTVAFDLGQACAGYLYGLFVAHSLIQSGLGKILLICGDTLSKFIHPKNMNLAPIFGDGVSATLIEKTDFNEAFFELGSDGKYFDKLIIPKGAMRIPKADIFNDDSLMQTEEFRQLENLYMDGANIFNMALECEPKSFKEILEFSKVDEKDIAFHLFHQSNAYLVDCIKEELKLNDDKVPNFIMEKYANLSACSLPTLLCELDTPKEFKASLSAFGAGLSWGSAVLNFKDLYTKNILIYTKEK.

Residues Cys122, His268, and Asn299 contribute to the active site.

It belongs to the thiolase-like superfamily. FabH family. As to quaternary structure, homodimer.

The protein localises to the cytoplasm. It carries out the reaction malonyl-[ACP] + acetyl-CoA + H(+) = 3-oxobutanoyl-[ACP] + CO2 + CoA. It participates in lipid metabolism; fatty acid biosynthesis. Functionally, may catalyze the condensation reaction of fatty acid synthesis by the addition to an acyl acceptor of two carbons from malonyl-ACP. The protein is Putative 3-oxoacyl-[acyl-carrier-protein] synthase 3 of Campylobacter jejuni subsp. jejuni serotype O:2 (strain ATCC 700819 / NCTC 11168).